The primary structure comprises 120 residues: Large ribosomal subunit protein bL19 (120 aa).

This sequence belongs to the bacterial ribosomal protein bL19 family.

Its function is as follows. This protein is located at the 30S-50S ribosomal subunit interface and may play a role in the structure and function of the aminoacyl-tRNA binding site. The protein is Large ribosomal subunit protein bL19 of Chlorobium chlorochromatii (strain CaD3).